A 249-amino-acid polypeptide reads, in one-letter code: Coproheme decarboxylase (249 aa).

Residues Arg131, 145–149 (YPMDK), His172, and Gln185 contribute to the Fe-coproporphyrin III site. Tyr145 is an active-site residue.

This sequence belongs to the ChdC family. Type 1 subfamily. The cofactor is Fe-coproporphyrin III.

The enzyme catalyses Fe-coproporphyrin III + 2 H2O2 + 2 H(+) = heme b + 2 CO2 + 4 H2O. It carries out the reaction Fe-coproporphyrin III + H2O2 + H(+) = harderoheme III + CO2 + 2 H2O. It catalyses the reaction harderoheme III + H2O2 + H(+) = heme b + CO2 + 2 H2O. It participates in porphyrin-containing compound metabolism; protoheme biosynthesis. Involved in coproporphyrin-dependent heme b biosynthesis. Catalyzes the decarboxylation of Fe-coproporphyrin III (coproheme) to heme b (protoheme IX), the last step of the pathway. The reaction occurs in a stepwise manner with a three-propionate intermediate. The chain is Coproheme decarboxylase from Staphylococcus epidermidis (strain ATCC 35984 / DSM 28319 / BCRC 17069 / CCUG 31568 / BM 3577 / RP62A).